The primary structure comprises 1392 residues: Ankyrin repeat domain-containing protein 30B (1392 aa).

Residues 1-21 (MKRLLAAAGKGVRGPEPPNPF) form a disordered region. 5 ANK repeats span residues 72–101 (KKRTALHWACVNGHAEVVTFLVDRKCQLNV), 105–134 (EGRTPLMKALQCEREACANILIDAGADLNY), 138–167 (YGNTALHYAVYSENLLMVATLLSYGAVIEV), 171–200 (ASLTPLLLAIQKRSKQTVEFLLTKNANANA), and 204–233 (SKCTALMLAICEGSSEIVGMLLQQNVDVFA). Disordered regions lie at residues 265–292 (PKNPQNTNPEGTSTGTPDEAAPLAERTP), 558–587 (AQMFPSESKQKDDEENSWDSESPCETVSQK), 636–656 (DRETFKAESPDKDGLLKPTCG), 671–690 (RETLKAESPDNDGLLKPTCG), 830–877 (KEGA…SDSE), and 904–926 (GKIEESPEKPSHFEPATEMQNSV). Composition is skewed to polar residues over residues 267–280 (NPQNTNPEGTSTGT) and 576–586 (DSESPCETVSQ). Over residues 636–650 (DRETFKAESPDKDGL) the composition is skewed to basic and acidic residues. A compositionally biased stretch (polar residues) spans 830–840 (KEGATKTVTGQ). Basic and acidic residues-rich tracts occupy residues 864 to 874 (LGRKEDTKSTS) and 904 to 915 (GKIEESPEKPSH). 2 coiled-coil regions span residues 960–1168 (RELK…KQDK) and 1270–1318 (ETQC…QQLV).

Expressed in brain, breast and testis.

In Homo sapiens (Human), this protein is Ankyrin repeat domain-containing protein 30B (ANKRD30B).